A 383-amino-acid chain; its full sequence is MKTIWLLLATCIHVFAHDELYILIDEVSLYNCRGVKNEITVKEEDVQIVNERGNRVYYIRAPGNYSLDFKKIKVKQNFGFLAGEIGVTLQVPVLEGPAGIRFDLPYTMVPETTLLSQKCDDFSGVIERNGRTYCRYCDLCHVSQAVENELASGRHQFLSQSENDTPISKCYNIESNEYDFRRTIQLPSRSQLEGLIRSKAQGIDDEIKKRLNKGRGRFQVFLNLITSDKPAISLNRWMAGSKDCECCFNRNAPHCDSLSYLYCNMEDCKTGWALQCLHKSAKVAACYTVEFNYRMTTSYSDVLEFLRENNYPNQDSQYTQPNQPLVPTTRRPVTPSFEARQANQLQMTQACVESMPSRMTHLKRYCTIFWNEKLCCEHCPDIC.

A signal peptide spans 1 to 16 (MKTIWLLLATCIHVFA). Asparagine 64 carries N-linked (GlcNAc...) asparagine glycosylation.

As to quaternary structure, interacts with daf-6. In terms of tissue distribution, expressed in sheath and socket glial cells in both the amphid and phasmid ciliated sensory neurons (at protein level).

The protein resides in the secreted. In terms of biological role, required for the localization of daf-6 to the socket glial channel and the sheath lumen. In association with daf-6, plays a role in dendrite extension and ciliogenesis to ensure the formation of glial channels in amphid and phasmid ciliated sensory neurons. The chain is Protein dyf-4 from Caenorhabditis elegans.